Reading from the N-terminus, the 66-residue chain is LYR motif-containing protein PHYPADRAFT_186863 (66 aa).

This sequence belongs to the complex I LYR family. LYRM9 subfamily.

This Physcomitrium patens (Spreading-leaved earth moss) protein is LYR motif-containing protein PHYPADRAFT_186863.